A 582-amino-acid chain; its full sequence is 2-succinyl-5-enolpyruvyl-6-hydroxy-3-cyclohexene-1-carboxylate synthase (582 aa).

It belongs to the TPP enzyme family. MenD subfamily. In terms of assembly, homodimer. The cofactor is Mg(2+). Mn(2+) serves as cofactor. It depends on thiamine diphosphate as a cofactor.

It carries out the reaction isochorismate + 2-oxoglutarate + H(+) = 5-enolpyruvoyl-6-hydroxy-2-succinyl-cyclohex-3-ene-1-carboxylate + CO2. It participates in quinol/quinone metabolism; 1,4-dihydroxy-2-naphthoate biosynthesis; 1,4-dihydroxy-2-naphthoate from chorismate: step 2/7. The protein operates within cofactor biosynthesis; phylloquinone biosynthesis. Catalyzes the thiamine diphosphate-dependent decarboxylation of 2-oxoglutarate and the subsequent addition of the resulting succinic semialdehyde-thiamine pyrophosphate anion to isochorismate to yield 2-succinyl-5-enolpyruvyl-6-hydroxy-3-cyclohexene-1-carboxylate (SEPHCHC). This chain is 2-succinyl-5-enolpyruvyl-6-hydroxy-3-cyclohexene-1-carboxylate synthase, found in Synechococcus elongatus (strain ATCC 33912 / PCC 7942 / FACHB-805) (Anacystis nidulans R2).